The following is an 82-amino-acid chain: UPF0154 protein SMU_1719c (82 aa).

Residues phenylalanine 4–isoleucine 24 form a helical membrane-spanning segment.

Belongs to the UPF0154 family.

The protein localises to the membrane. The polypeptide is UPF0154 protein SMU_1719c (Streptococcus mutans serotype c (strain ATCC 700610 / UA159)).